Reading from the N-terminus, the 396-residue chain is Acetate kinase (396 aa).

N8 contributes to the Mg(2+) binding site. Residue K15 coordinates ATP. A substrate-binding site is contributed by R89. D146 serves as the catalytic Proton donor/acceptor. Residues 206–210 (HIGNG), 283–285 (DMR), and 331–335 (GVGEN) each bind ATP. E383 provides a ligand contact to Mg(2+).

This sequence belongs to the acetokinase family. As to quaternary structure, homodimer. It depends on Mg(2+) as a cofactor. Requires Mn(2+) as cofactor.

The protein localises to the cytoplasm. It carries out the reaction acetate + ATP = acetyl phosphate + ADP. It participates in metabolic intermediate biosynthesis; acetyl-CoA biosynthesis; acetyl-CoA from acetate: step 1/2. Functionally, catalyzes the formation of acetyl phosphate from acetate and ATP. Can also catalyze the reverse reaction. The protein is Acetate kinase of Streptococcus pneumoniae (strain ATCC 700669 / Spain 23F-1).